The sequence spans 171 residues: Ribosome maturation factor RimP (171 aa).

The protein belongs to the RimP family.

The protein resides in the cytoplasm. In terms of biological role, required for maturation of 30S ribosomal subunits. This is Ribosome maturation factor RimP from Anaeromyxobacter dehalogenans (strain 2CP-1 / ATCC BAA-258).